A 305-amino-acid chain; its full sequence is Delta-9 acyl-lipid desaturase 1 (305 aa).

The interval 1–20 (MSLSASEKEENNKKMAADKA) is disordered. 2 helical membrane-spanning segments follow: residues 39–59 (IVKA…PFNF) and 60–80 (TWPA…GITV). 5 residues coordinate Fe cation: histidine 83, histidine 88, histidine 120, histidine 123, and histidine 124. The Histidine box-1 signature appears at 83-88 (HRNLAH). A Histidine box-2 motif is present at residues 120–124 (HRYHH). A helical transmembrane segment spans residues 180 to 200 (VLYHILTFGFLLYYFGGLSFL). 4 residues coordinate Fe cation: histidine 223, histidine 252, histidine 255, and histidine 256. The Histidine box-3 signature appears at 252–256 (HNNHH). Residues 268 to 288 (WWQIDISWYIVRFLEIIGLAT) form a helical membrane-spanning segment.

Belongs to the fatty acid desaturase type 1 family. The cofactor is Fe cation. Strongly expressed in inflorescence meristems, leaves, and flowers, and weakly in roots and seedpods.

It localises to the endoplasmic reticulum membrane. The protein resides in the plastid. It is found in the chloroplast membrane. Its pathway is lipid metabolism; polyunsaturated fatty acid biosynthesis. In terms of biological role, involved in delta-9 desaturation of fatty acids. Involved in the production of very-long-chain fatty acids (VLCFAs). May desaturate chloroplastic monogalactosyl diacylglycerol (MGDG) and alter chloroplast membrane fluidity, which is required to prime a cold acclimation response. This is Delta-9 acyl-lipid desaturase 1 from Arabidopsis thaliana (Mouse-ear cress).